The following is a 477-amino-acid chain: Putative BTB/POZ domain-containing protein R830 (477 aa).

The BTB domain occupies 13–83 (SDLELILVDK…FYGIETNNDP (71 aa)).

The protein belongs to the mimivirus BTB/WD family.

The sequence is that of Putative BTB/POZ domain-containing protein R830 from Acanthamoeba polyphaga mimivirus (APMV).